Reading from the N-terminus, the 271-residue chain is Sec-independent protein translocase protein TatC (271 aa).

A run of 5 helical transmembrane segments spans residues Ile24–Phe44, Phe78–Ala98, Phe112–Phe132, Leu159–Leu179, and Phe215–Gly235. Positions Ala247 to Ala271 are disordered.

Belongs to the TatC family. In terms of assembly, the Tat system comprises two distinct complexes: a TatABC complex, containing multiple copies of TatA, TatB and TatC subunits, and a separate TatA complex, containing only TatA subunits. Substrates initially bind to the TatABC complex, which probably triggers association of the separate TatA complex to form the active translocon.

The protein resides in the cell inner membrane. Functionally, part of the twin-arginine translocation (Tat) system that transports large folded proteins containing a characteristic twin-arginine motif in their signal peptide across membranes. Together with TatB, TatC is part of a receptor directly interacting with Tat signal peptides. This chain is Sec-independent protein translocase protein TatC, found in Magnetococcus marinus (strain ATCC BAA-1437 / JCM 17883 / MC-1).